The sequence spans 681 residues: Potassium-transporting ATPase ATP-binding subunit (681 aa).

Helical transmembrane passes span 30 to 50, 59 to 79, 216 to 236, and 255 to 275; these read LLVYVGAILATSLYFLGFFGI, LAIALILWFTVLFANFAEAIA, ILLVTLSIIFLAVSATLLPFT, and IALLVCLAPTTIGALLSSIGI. The active-site 4-aspartylphosphate intermediate is Asp-306. ATP is bound by residues Asp-343, Glu-347, 376–383, and Lys-394; that span reads FTATTRMS. Mg(2+)-binding residues include Asp-517 and Asp-521. Helical transmembrane passes span 587–607, 615–635, and 661–681; these read FAIIPVLFYGIFPQLEALNLM, AILSAIIYNALIIIFLIPLSL, and LVAPFIAIKLIDMLLTVLGIV.

The protein belongs to the cation transport ATPase (P-type) (TC 3.A.3) family. Type IA subfamily. In terms of assembly, the system is composed of three essential subunits: KdpA, KdpB and KdpC.

The protein localises to the cell membrane. The catalysed reaction is K(+)(out) + ATP + H2O = K(+)(in) + ADP + phosphate + H(+). In terms of biological role, part of the high-affinity ATP-driven potassium transport (or Kdp) system, which catalyzes the hydrolysis of ATP coupled with the electrogenic transport of potassium into the cytoplasm. This subunit is responsible for energy coupling to the transport system and for the release of the potassium ions to the cytoplasm. This is Potassium-transporting ATPase ATP-binding subunit from Listeria welshimeri serovar 6b (strain ATCC 35897 / DSM 20650 / CCUG 15529 / CIP 8149 / NCTC 11857 / SLCC 5334 / V8).